The primary structure comprises 330 residues: D-alanine--D-alanine ligase (330 aa).

An ATP-grasp domain is found at asparagine 122–arginine 323. Isoleucine 151–threonine 206 contacts ATP. Positions 277, 290, and 292 each coordinate Mg(2+).

It belongs to the D-alanine--D-alanine ligase family. The cofactor is Mg(2+). Mn(2+) serves as cofactor.

Its subcellular location is the cytoplasm. The enzyme catalyses 2 D-alanine + ATP = D-alanyl-D-alanine + ADP + phosphate + H(+). It functions in the pathway cell wall biogenesis; peptidoglycan biosynthesis. Its function is as follows. Cell wall formation. The polypeptide is D-alanine--D-alanine ligase (Porphyromonas gingivalis (strain ATCC BAA-308 / W83)).